The following is a 118-amino-acid chain: V-type proton ATPase subunit G 1 (118 aa).

A2 bears the N-acetylalanine mark. The tract at residues F55–R90 is disordered. 2 stretches are compositionally biased toward polar residues: residues Q56–L69 and R78–Q89.

Belongs to the V-ATPase G subunit family. As to quaternary structure, V-ATPase is a heteromultimeric enzyme made up of two complexes: the ATP-hydrolytic V1 complex and the proton translocation V0 complex. The V1 complex consists of three catalytic AB heterodimers that form a heterohexamer, three peripheral stalks each consisting of EG heterodimers, one central rotor including subunits D and F, and the regulatory subunits C and H. The proton translocation complex V0 consists of the proton transport subunit a, a ring of proteolipid subunits c9c'', rotary subunit d, subunits e and f, and the accessory subunits ATP6AP1/Ac45 and ATP6AP2/PRR.

The protein localises to the apical cell membrane. In terms of biological role, subunit of the V1 complex of vacuolar(H+)-ATPase (V-ATPase), a multisubunit enzyme composed of a peripheral complex (V1) that hydrolyzes ATP and a membrane integral complex (V0) that translocates protons. V-ATPase is responsible for acidifying and maintaining the pH of intracellular compartments and in some cell types, is targeted to the plasma membrane, where it is responsible for acidifying the extracellular environment. In aerobic conditions, involved in intracellular iron homeostasis, thus triggering the activity of Fe(2+) prolyl hydroxylase (PHD) enzymes, and leading to HIF1A hydroxylation and subsequent proteasomal degradation. This Canis lupus familiaris (Dog) protein is V-type proton ATPase subunit G 1 (ATP6V1G1).